The following is a 646-amino-acid chain: Anoctamin-10 (646 aa).

A run of 8 helical transmembrane segments spans residues 210 to 230 (LYFGFLEYFTFALIPMALIGI), 241 to 261 (DKYVLFAVFNLVWSTVFLEVW), 314 to 334 (IYLVSVPFVLLCLYLSFYVMM), 357 to 377 (VLLFVPSIIYAVVIEIMNLLY), 404 to 424 (VLVFNFVNCFASLFYIAFVMQ), 502 to 522 (FLLFGYVSLFSCVHPLAAVLV), 557 to 577 (LAFETMSIIAVVTNCALIALS), and 592 to 612 (ILTVVAIEHVLLAFKFILAFV).

It belongs to the anoctamin family.

It localises to the membrane. Its function is as follows. Does not exhibit calcium-activated chloride channel (CaCC) activity. Can inhibit the activity of ANO1. The polypeptide is Anoctamin-10 (ano10) (Danio rerio (Zebrafish)).